The sequence spans 179 residues: Avenin-like a2 (179 aa).

A signal peptide spans 1–19 (MKTMFLLALLAFTATSAVA).

The protein belongs to the prolamin family. In terms of processing, contains 7 disulfide bonds.

Its function is as follows. Seed storage protein. Not integrated in the gluten polymer through disulfide bonds, unless incorporated by reduction and reoxidation during dough making. Increases dough strength and bread volume, but decreases dough stability when added into a base wheat flour. This Triticum aestivum (Wheat) protein is Avenin-like a2.